A 328-amino-acid polypeptide reads, in one-letter code: Ribosomal RNA large subunit methyltransferase F (328 aa).

The disordered stretch occupies residues 1 to 31 (MTDTRKPPRKKPQRPAKPAAPREKATLHPRN).

This sequence belongs to the methyltransferase superfamily. METTL16/RlmF family.

The protein localises to the cytoplasm. It carries out the reaction adenosine(1618) in 23S rRNA + S-adenosyl-L-methionine = N(6)-methyladenosine(1618) in 23S rRNA + S-adenosyl-L-homocysteine + H(+). In terms of biological role, specifically methylates the adenine in position 1618 of 23S rRNA. The chain is Ribosomal RNA large subunit methyltransferase F from Pseudomonas syringae pv. syringae (strain B728a).